The sequence spans 195 residues: Large ribosomal subunit protein eL18 (195 aa).

Lysine 126 is covalently cross-linked (Glycyl lysine isopeptide (Lys-Gly) (interchain with G-Cter in SUMO2)). Serine 137 is modified (phosphoserine). The segment at 158 to 195 (HFGKAPGTPHSHTKPYVRSKGRKFERARGRRASRGYKN) is disordered. Threonine 165 bears the Phosphothreonine mark. 2 stretches are compositionally biased toward basic residues: residues 168 to 178 (SHTKPYVRSKG) and 185 to 195 (RGRRASRGYKN). Residue lysine 171 forms a Glycyl lysine isopeptide (Lys-Gly) (interchain with G-Cter in SUMO2) linkage.

The protein belongs to the eukaryotic ribosomal protein eL18 family. In terms of assembly, component of the large ribosomal subunit.

The protein resides in the cytoplasm. It localises to the cytosol. It is found in the rough endoplasmic reticulum. Component of the large ribosomal subunit. The chain is Large ribosomal subunit protein eL18 (RPL18) from Sus scrofa (Pig).